A 229-amino-acid chain; its full sequence is Thylakoid lumenal 19 kDa protein, chloroplastic (229 aa).

The protein resides in the plastid. The protein localises to the chloroplast thylakoid lumen. In Arabidopsis thaliana (Mouse-ear cress), this protein is Thylakoid lumenal 19 kDa protein, chloroplastic.